A 123-amino-acid polypeptide reads, in one-letter code: Putative iron-sulfur cluster insertion protein ErpA (123 aa).

Positions 51, 115, and 117 each coordinate iron-sulfur cluster.

Belongs to the HesB/IscA family. In terms of assembly, homodimer. Iron-sulfur cluster is required as a cofactor.

In terms of biological role, required for insertion of 4Fe-4S clusters. This is Putative iron-sulfur cluster insertion protein ErpA from Burkholderia multivorans (strain ATCC 17616 / 249).